Consider the following 336-residue polypeptide: Inactive serine/threonine-protein kinase BKN2 (336 aa).

The disordered stretch occupies residues 1 to 25 (MGNCLKPLKEQPPSASPKPLTIPSS). Gly2 carries N-myristoyl glycine lipidation. Cys4 carries the S-palmitoyl cysteine lipid modification. Residues 52-332 (YMVIKGNDNG…QVFDGLNDIA (281 aa)) enclose the Protein kinase domain.

It belongs to the protein kinase superfamily. Ser/Thr protein kinase family. In terms of assembly, component of an immune signaling complex made of, at least, SZE1, BKN2/SZE2, ZAR1 and ZED1. Interacts directly with ZAR1 and Pseudomonas syringae HOPZ1A at the plasma membrane. Post-translationally, N-terminal myristoylation is critical for plasma membrane localization and implication in defense responses. As to expression, expressed in stigma and ovaries in flowers, and in stems and seedlings.

The protein resides in the cell membrane. Together with SZE1 and ZED1, required for effector-triggered immunity (e.g. Pseudomonas syringae type III effector HopZ1a) via the activation of ZAR1, thus being essential for resistance against P. syringae pv. tomato DC3000 expressing HopZ1a. Collaboratively with BKN1, involved in compatible pollen-stigma interactions. The polypeptide is Inactive serine/threonine-protein kinase BKN2 (Arabidopsis thaliana (Mouse-ear cress)).